We begin with the raw amino-acid sequence, 967 residues long: uncharacterized protein (967 aa).

Disordered regions lie at residues 1–23 (MQNA…FHDR) and 41–72 (FTMH…DPRT). The span at 14–23 (KGRDVNFHDR) shows a compositional bias: basic and acidic residues. Residues 60–72 (RLSNYSSAVDPRT) are compositionally biased toward polar residues. Position 86 is a phosphoserine (Ser-86). Disordered regions lie at residues 135–259 (AVSE…QHLP), 271–296 (SVSR…SPPE), 380–399 (DSTT…APHK), 437–464 (HSYG…FVAD), and 499–544 (GTRF…KSLS). Residues 162-187 (ESSTSNNLETGNSTNTALHNVSSPLE) show a composition bias toward polar residues. Basic and acidic residues predominate over residues 205–218 (HDLDEVISEKDTSL). A compositionally biased stretch (basic residues) spans 221-234 (RSSRGRSSAPKRRK). Residues 278-294 (SPASTPRSSVSSVSSSP) are compositionally biased toward low complexity. The segment covering 382–394 (TTEYVNTESSSKT) has biased composition (polar residues). Residues 499–508 (GTRFHSRSSH) are compositionally biased toward basic residues. At Ser-585 the chain carries Phosphoserine. Disordered regions lie at residues 594 to 665 (ESNE…SVND) and 681 to 708 (DHRI…ESQH). Positions 608–622 (YDSRESTGHTIKELR) are enriched in basic and acidic residues. The segment covering 686-704 (ASDNQNNNNNDANALAENS) has biased composition (low complexity). 728 to 736 (PCVLDVKMG) provides a ligand contact to substrate.

It belongs to the inositol phosphokinase (IPK) family.

The protein localises to the cytoplasm. This is an uncharacterized protein from Schizosaccharomyces pombe (strain 972 / ATCC 24843) (Fission yeast).